The sequence spans 345 residues: Biotin synthase (345 aa).

Positions 66–291 (PEVEIEGIIS…RTILRFAGGR (226 aa)) constitute a Radical SAM core domain. Residues C81, C85, and C88 each contribute to the [4Fe-4S] cluster site. [2Fe-2S] cluster contacts are provided by C124, C157, C216, and R286.

The protein belongs to the radical SAM superfamily. Biotin synthase family. Homodimer. It depends on [4Fe-4S] cluster as a cofactor. [2Fe-2S] cluster is required as a cofactor.

The enzyme catalyses (4R,5S)-dethiobiotin + (sulfur carrier)-SH + 2 reduced [2Fe-2S]-[ferredoxin] + 2 S-adenosyl-L-methionine = (sulfur carrier)-H + biotin + 2 5'-deoxyadenosine + 2 L-methionine + 2 oxidized [2Fe-2S]-[ferredoxin]. Its pathway is cofactor biosynthesis; biotin biosynthesis; biotin from 7,8-diaminononanoate: step 2/2. Catalyzes the conversion of dethiobiotin (DTB) to biotin by the insertion of a sulfur atom into dethiobiotin via a radical-based mechanism. The protein is Biotin synthase of Mycobacterium leprae (strain Br4923).